The primary structure comprises 1137 residues: AP-4 complex subunit epsilon-1 (1137 aa).

A phosphoserine mark is found at Ser-700 and Ser-857. Positions 727–1137 are interaction with TEPSIN; it reads SGALPVPQES…YQCQKVMEGS (411 aa).

The protein belongs to the adaptor complexes large subunit family. In terms of assembly, adaptor protein complex 4 (AP-4) is a heterotetramer composed of two large adaptins (epsilon-type subunit AP4E1 and beta-type subunit AP4B1), a medium adaptin (mu-type subunit AP4M1) and a small adaptin (sigma-type AP4S1). Interacts with TEPSIN. Interacts with GRIA2; probably indirect it mediates the somatodendritic localization of GRIA2 in neurons. Widely expressed.

It localises to the golgi apparatus. It is found in the trans-Golgi network membrane. Functionally, component of the adaptor protein complex 4 (AP-4). Adaptor protein complexes are vesicle coat components involved both in vesicle formation and cargo selection. They control the vesicular transport of proteins in different trafficking pathways. AP-4 forms a non clathrin-associated coat on vesicles departing the trans-Golgi network (TGN) and may be involved in the targeting of proteins from the trans-Golgi network (TGN) to the endosomal-lysosomal system. It is also involved in protein sorting to the basolateral membrane in epithelial cells and the proper asymmetric localization of somatodendritic proteins in neurons. AP-4 is involved in the recognition and binding of tyrosine-based sorting signals found in the cytoplasmic part of cargos, but may also recognize other types of sorting signal. In Homo sapiens (Human), this protein is AP-4 complex subunit epsilon-1.